Consider the following 221-residue polypeptide: Peptide methionine sulfoxide reductase MsrA (221 aa).

Cysteine 54 is an active-site residue.

Belongs to the MsrA Met sulfoxide reductase family.

The catalysed reaction is L-methionyl-[protein] + [thioredoxin]-disulfide + H2O = L-methionyl-(S)-S-oxide-[protein] + [thioredoxin]-dithiol. It catalyses the reaction [thioredoxin]-disulfide + L-methionine + H2O = L-methionine (S)-S-oxide + [thioredoxin]-dithiol. Functionally, has an important function as a repair enzyme for proteins that have been inactivated by oxidation. Catalyzes the reversible oxidation-reduction of methionine sulfoxide in proteins to methionine. The protein is Peptide methionine sulfoxide reductase MsrA of Methylobacterium sp. (strain 4-46).